The following is a 173-amino-acid chain: Bifunctional protein PyrR (173 aa).

Positions 93–105 (VILVDDVLYTGRT) match the PRPP-binding motif.

It belongs to the purine/pyrimidine phosphoribosyltransferase family. PyrR subfamily. In terms of assembly, homodimer and homohexamer; in equilibrium.

The enzyme catalyses UMP + diphosphate = 5-phospho-alpha-D-ribose 1-diphosphate + uracil. In terms of biological role, regulates transcriptional attenuation of the pyrimidine nucleotide (pyr) operon by binding in a uridine-dependent manner to specific sites on pyr mRNA. This disrupts an antiterminator hairpin in the RNA and favors formation of a downstream transcription terminator, leading to a reduced expression of downstream genes. Functionally, also displays a weak uracil phosphoribosyltransferase activity which is not physiologically significant. The sequence is that of Bifunctional protein PyrR from Streptococcus pneumoniae (strain 70585).